The chain runs to 246 residues: tRNA (guanine-N(1)-)-methyltransferase (246 aa).

S-adenosyl-L-methionine-binding positions include Gly-113 and 133-138 (IGDFVM).

Belongs to the RNA methyltransferase TrmD family. Homodimer.

It localises to the cytoplasm. It carries out the reaction guanosine(37) in tRNA + S-adenosyl-L-methionine = N(1)-methylguanosine(37) in tRNA + S-adenosyl-L-homocysteine + H(+). In terms of biological role, specifically methylates guanosine-37 in various tRNAs. The chain is tRNA (guanine-N(1)-)-methyltransferase from Vibrio atlanticus (strain LGP32) (Vibrio splendidus (strain Mel32)).